The following is a 262-amino-acid chain: MFELIFPGWLAGVLLSLTTGPLGSFIVWRRMSSFGDTLSHSSLLGIALSIAFNINSFYAILILMSFIAIILAWLEELLPVSLDTVLNIISHSSLSLGMVFISLISSKKEINITNYLFGDLLSVTKNDLITISISSILILSILLFRWHSILSSTINEELSQIDGINVLYARLTIMLMTAFTIAIAIKFVGALLITSLLIIPPATAQHFSGSPEKMVIIAIIVSILSVTGGISLSVFYNTPASPSIVLCSSFLCLISNIKKHFY.

Helical transmembrane passes span 8-28, 54-74, 84-104, 129-149, 179-199, 215-235, and 238-254; these read GWLAGVLLSLTTGPLGSFIVW, INSFYAILILMSFIAIILAWL, TVLNIISHSSLSLGMVFISLI, ITISISSILILSILLFRWHSI, FTIAIAIKFVGALLITSLLII, VIIAIIVSILSVTGGISLSVF, and TPASPSIVLCSSFLCLI.

This sequence belongs to the ABC-3 integral membrane protein family.

It is found in the cell membrane. Involved in the high-affinity zinc uptake transport system. The chain is High-affinity zinc uptake system membrane protein ZnuB (znuB) from Buchnera aphidicola subsp. Acyrthosiphon pisum (strain APS) (Acyrthosiphon pisum symbiotic bacterium).